The primary structure comprises 357 residues: MALQIAKRLLRCRADSVASSVRFFDRTFTSESNSNLIRATLFPGDGIGPEIAESVRQIFKVAEVPIEWEEHYVGTEVDPRTNSFLTWESLESVRRNKVGLKGPMATPIGKGHRSLNLTLRKELNLYANVRPCYSLPGYKTRYDDVNLITIRENTEGEYSGLEHQVVRGVVESLKIITRQASLRVAEYAFHYAKTHGRERVSAIHKANIMQKTDGLFLKCCREVAEKYPEIKYEEVVIDNCCMMLVKNPALFDVLVMPNLYGDIISDLCAGLIGGLGLTPSCNIGEGGIALAEAVHGSAPDIAGKNLANPTALLLSSVSMLRHLELHDKADRIQDAILKTIAGGKVPNWRPWRHCYNN.

Residues methionine 1–threonine 29 constitute a chloroplast transit peptide. Arginine 120, arginine 130, arginine 151, and aspartate 238 together coordinate substrate. 3 residues coordinate Mg(2+): aspartate 238, aspartate 262, and aspartate 266. Glycine 296–asparagine 308 is an NAD(+) binding site.

Belongs to the isocitrate and isopropylmalate dehydrogenases family. As to quaternary structure, homodimer. It depends on Mg(2+) as a cofactor. Requires Mn(2+) as cofactor.

It is found in the plastid. Its subcellular location is the chloroplast. It catalyses the reaction (2R,3S)-3-isopropylmalate + NAD(+) = 4-methyl-2-oxopentanoate + CO2 + NADH. Its pathway is amino-acid biosynthesis; L-leucine biosynthesis; L-leucine from 3-methyl-2-oxobutanoate: step 3/4. Its function is as follows. Catalyzes the oxidation of 3-carboxy-2-hydroxy-4-methylpentanoate (3-isopropylmalate) to 3-carboxy-4-methyl-2-oxopentanoate. The product decarboxylates to 4-methyl-2 oxopentanoate. The polypeptide is 3-isopropylmalate dehydrogenase, chloroplastic (Solanum tuberosum (Potato)).